The chain runs to 325 residues: UPF0285 protein MMP0642 (325 aa).

It belongs to the UPF0285 family.

The protein is UPF0285 protein MMP0642 of Methanococcus maripaludis (strain DSM 14266 / JCM 13030 / NBRC 101832 / S2 / LL).